We begin with the raw amino-acid sequence, 89 residues long: Small ribosomal subunit protein uS15 (89 aa).

The protein belongs to the universal ribosomal protein uS15 family. Part of the 30S ribosomal subunit. Forms a bridge to the 50S subunit in the 70S ribosome, contacting the 23S rRNA.

In terms of biological role, one of the primary rRNA binding proteins, it binds directly to 16S rRNA where it helps nucleate assembly of the platform of the 30S subunit by binding and bridging several RNA helices of the 16S rRNA. Functionally, forms an intersubunit bridge (bridge B4) with the 23S rRNA of the 50S subunit in the ribosome. This chain is Small ribosomal subunit protein uS15, found in Solibacter usitatus (strain Ellin6076).